A 247-amino-acid polypeptide reads, in one-letter code: Adenosylcobinamide-GDP ribazoletransferase (247 aa).

Transmembrane regions (helical) follow at residues 31–51 (VVWF…AAAL), 57–77 (PWLG…GLHL), 109–129 (FGVI…HWLL), 136–156 (PALV…TLLL), 189–209 (ITPI…WMWL), and 218–238 (ILGA…GVSL).

The protein belongs to the CobS family. Mg(2+) is required as a cofactor.

It is found in the cell inner membrane. It carries out the reaction alpha-ribazole + adenosylcob(III)inamide-GDP = adenosylcob(III)alamin + GMP + H(+). The enzyme catalyses alpha-ribazole 5'-phosphate + adenosylcob(III)inamide-GDP = adenosylcob(III)alamin 5'-phosphate + GMP + H(+). It functions in the pathway cofactor biosynthesis; adenosylcobalamin biosynthesis; adenosylcobalamin from cob(II)yrinate a,c-diamide: step 7/7. Its function is as follows. Joins adenosylcobinamide-GDP and alpha-ribazole to generate adenosylcobalamin (Ado-cobalamin). Also synthesizes adenosylcobalamin 5'-phosphate from adenosylcobinamide-GDP and alpha-ribazole 5'-phosphate. This is Adenosylcobinamide-GDP ribazoletransferase from Thiobacillus denitrificans (strain ATCC 25259 / T1).